The following is a 290-amino-acid chain: ATP synthase gamma chain (290 aa).

Belongs to the ATPase gamma chain family. As to quaternary structure, F-type ATPases have 2 components, CF(1) - the catalytic core - and CF(0) - the membrane proton channel. CF(1) has five subunits: alpha(3), beta(3), gamma(1), delta(1), epsilon(1). CF(0) has three main subunits: a, b and c.

The protein resides in the cell membrane. In terms of biological role, produces ATP from ADP in the presence of a proton gradient across the membrane. The gamma chain is believed to be important in regulating ATPase activity and the flow of protons through the CF(0) complex. This Buchnera aphidicola subsp. Acyrthosiphon pisum (strain 5A) protein is ATP synthase gamma chain.